The chain runs to 955 residues: Iron-responsive element-binding protein 2 (955 aa).

[4Fe-4S] cluster is bound by residues cysteine 504, cysteine 570, and cysteine 573.

It belongs to the aconitase/IPM isomerase family. It depends on [4Fe-4S] cluster as a cofactor. In terms of processing, ubiquitinated and degraded by the proteasome in presence of high level of iron and oxygen.

Its subcellular location is the cytoplasm. Its function is as follows. RNA-binding protein that binds to iron-responsive elements (IRES), which are stem-loop structures found in the 5'-UTR of ferritin, and delta aminolevulinic acid synthase mRNAs, and in the 3'-UTR of transferrin receptor mRNA. Binding to the IRE element in ferritin results in the repression of its mRNA translation. Binding of the protein to the transferrin receptor mRNA inhibits the degradation of this otherwise rapidly degraded mRNA. The sequence is that of Iron-responsive element-binding protein 2 (ireb2) from Xenopus laevis (African clawed frog).